The sequence spans 412 residues: Peptidase T (412 aa).

His-84 contributes to the Zn(2+) binding site. The active site involves Asp-86. Asp-146 serves as a coordination point for Zn(2+). Glu-179 (proton acceptor) is an active-site residue. The Zn(2+) site is built by Glu-180, Asp-202, and His-385.

This sequence belongs to the peptidase M20B family. The cofactor is Zn(2+).

It is found in the cytoplasm. The catalysed reaction is Release of the N-terminal residue from a tripeptide.. Cleaves the N-terminal amino acid of tripeptides. This Haemophilus influenzae (strain 86-028NP) protein is Peptidase T.